The chain runs to 445 residues: NAD(P)H coenzyme A polysulfide/persulfide reductase (445 aa).

A16–A17 provides a ligand contact to FAD. A CoA-binding site is contributed by R27. FAD-binding positions include E38–A39 and H45–P47. CoA is bound by residues S44–C48, Y65–Y66, and R75. The active-site Redox-active is C48. FAD is bound by residues V85, D283, and A301. Residues N305 and K361 each coordinate CoA. Y425 is a binding site for FAD. The CoA site is built by W433 and R441.

This sequence belongs to the class-III pyridine nucleotide-disulfide oxidoreductase family. In terms of assembly, homodimer. Homotetramer. FAD is required as a cofactor.

The enzyme catalyses NADP(+) + 2 CoA = CoA-disulfide + NADPH + H(+). It carries out the reaction NAD(+) + 2 CoA = CoA-disulfide + NADH + H(+). Functionally, catalyzes the NAD(P)H-dependent reduction of polysulfide, CoA-polysulfides, and CoA persulfide, as well as the reduction of a range of other small persulfides, including TNB and glutathione persulfides. The likely in vivo substrates are di-, poly-, and persulfide derivatives of coenzyme A, although polysulfide itself is also efficiently reduced. Shows coenzyme A disulfide reductase (CoADR) activity with both NADH and NADPH, with a preference for NADPH. May also play a role in the reduction of elemental sulfur. The sequence is that of NAD(P)H coenzyme A polysulfide/persulfide reductase from Pyrococcus horikoshii (strain ATCC 700860 / DSM 12428 / JCM 9974 / NBRC 100139 / OT-3).